A 567-amino-acid chain; its full sequence is 2-succinyl-5-enolpyruvyl-6-hydroxy-3-cyclohexene-1-carboxylate synthase (567 aa).

This sequence belongs to the TPP enzyme family. MenD subfamily. Homodimer. Mg(2+) serves as cofactor. It depends on Mn(2+) as a cofactor. Thiamine diphosphate is required as a cofactor.

The enzyme catalyses isochorismate + 2-oxoglutarate + H(+) = 5-enolpyruvoyl-6-hydroxy-2-succinyl-cyclohex-3-ene-1-carboxylate + CO2. It participates in quinol/quinone metabolism; 1,4-dihydroxy-2-naphthoate biosynthesis; 1,4-dihydroxy-2-naphthoate from chorismate: step 2/7. The protein operates within quinol/quinone metabolism; menaquinone biosynthesis. In terms of biological role, catalyzes the thiamine diphosphate-dependent decarboxylation of 2-oxoglutarate and the subsequent addition of the resulting succinic semialdehyde-thiamine pyrophosphate anion to isochorismate to yield 2-succinyl-5-enolpyruvyl-6-hydroxy-3-cyclohexene-1-carboxylate (SEPHCHC). This chain is 2-succinyl-5-enolpyruvyl-6-hydroxy-3-cyclohexene-1-carboxylate synthase, found in Yersinia pestis bv. Antiqua (strain Angola).